Reading from the N-terminus, the 296-residue chain is Protoheme IX farnesyltransferase 1 (296 aa).

8 consecutive transmembrane segments (helical) span residues 14–34 (IVLL…ALSA), 41–61 (LWDY…SSAL), 86–106 (IGEN…VVYA), 108–128 (FLLN…YVII), 141–161 (IVIG…AATG), 165–185 (LLGF…FWCL), 230–250 (AFGM…LMLV), and 274–294 (YLTI…PFPF).

The protein belongs to the UbiA prenyltransferase family. Protoheme IX farnesyltransferase subfamily.

The protein localises to the cell membrane. It carries out the reaction heme b + (2E,6E)-farnesyl diphosphate + H2O = Fe(II)-heme o + diphosphate. It functions in the pathway porphyrin-containing compound metabolism; heme O biosynthesis; heme O from protoheme: step 1/1. Converts heme B (protoheme IX) to heme O by substitution of the vinyl group on carbon 2 of heme B porphyrin ring with a hydroxyethyl farnesyl side group. The sequence is that of Protoheme IX farnesyltransferase 1 from Cenarchaeum symbiosum (strain A).